A 307-amino-acid polypeptide reads, in one-letter code: Coproporphyrin III ferrochelatase (307 aa).

Fe-coproporphyrin III contacts are provided by residues Tyr12, Arg29, 45-46 (RY), Ser53, and Tyr124. Fe(2+) is bound by residues His181 and Glu263.

Belongs to the ferrochelatase family.

It localises to the cytoplasm. The enzyme catalyses Fe-coproporphyrin III + 2 H(+) = coproporphyrin III + Fe(2+). The protein operates within porphyrin-containing compound metabolism; protoheme biosynthesis. Involved in coproporphyrin-dependent heme b biosynthesis. Catalyzes the insertion of ferrous iron into coproporphyrin III to form Fe-coproporphyrin III. This chain is Coproporphyrin III ferrochelatase, found in Staphylococcus aureus (strain MRSA252).